Consider the following 158-residue polypeptide: NAD(P)H-quinone oxidoreductase subunit J, chloroplastic (158 aa).

This sequence belongs to the complex I 30 kDa subunit family. In terms of assembly, NDH is composed of at least 16 different subunits, 5 of which are encoded in the nucleus.

The protein localises to the plastid. The protein resides in the chloroplast thylakoid membrane. The enzyme catalyses a plastoquinone + NADH + (n+1) H(+)(in) = a plastoquinol + NAD(+) + n H(+)(out). It catalyses the reaction a plastoquinone + NADPH + (n+1) H(+)(in) = a plastoquinol + NADP(+) + n H(+)(out). Functionally, NDH shuttles electrons from NAD(P)H:plastoquinone, via FMN and iron-sulfur (Fe-S) centers, to quinones in the photosynthetic chain and possibly in a chloroplast respiratory chain. The immediate electron acceptor for the enzyme in this species is believed to be plastoquinone. Couples the redox reaction to proton translocation, and thus conserves the redox energy in a proton gradient. The protein is NAD(P)H-quinone oxidoreductase subunit J, chloroplastic of Angiopteris evecta (Mule's foot fern).